Here is a 682-residue protein sequence, read N- to C-terminus: MSRKQLALFEPVLLVQALTDAVKKLSPRAQWRNPVMFVVWAGSVLTTLLTLAMVTGQIAGSALFTGIISLWLWFTVLFANFAEALAEGRSKAQANSLKGVKKTAFARRLRAPRHDAQADNVPAAELRKGDIVLVKAGDIIPCDGEVIEGGASVDESAITGESAPVIRESGGDFASVTGGTRILSDWLVIACSVNPGETFLDRMIAMVEGAQRRKTPNEIALTILLIALTIVFLLATATLWPFSAWGGNAVSVTVLVALLVCLIPTTIGGLLSAIGVAGMSRMLGANVIATSGRAVEAAGDVDVLLLDKTGTITLGNRQASDFIPARGVDERTLADAAQLASLADETPEGRSIVILAKQRFNLRERDVQSLHATFVPFTAQSRMSGINIDNRMIRKGSVDAIRRHVESNGGHFPADVEQNVENVARLGATPLVVVEGARVLGVITLKDIVKGGIKERFAQLRKMGIKTVMITGDNRLTAAAIAAEAGVDDFLAEATPEAKLALIRQYQAEGRLVAMTGDGTNDAPALAQADVAVAMNSGTQAAKEAGNMVDLDSNPTKLIEVVHIGKQMLMTRGSLTTFSIANDVAKYFAIIPAAFAATYPQLNALNVMGLHSPNSAILSAVIFNALIIIFLIPLALKGVSYKPLSASAMLRRNLWNYGLGGLVVPFIGIKVIDVLLTLLGLA.

4 helical membrane passes run 34-54, 58-78, 219-239, and 254-274; these read PVMF…LAMV, IAGS…TVLF, IALT…TATL, and VLVA…LSAI. Residue Asp-307 is the 4-aspartylphosphate intermediate of the active site. Residues Asp-344, Glu-348, 377–384, and Lys-395 each bind ATP; that span reads FTAQSRMS. 2 residues coordinate Mg(2+): Asp-518 and Asp-522. 3 helical membrane passes run 588 to 608, 616 to 636, and 662 to 682; these read FAII…LNVM, AILS…PLAL, and LVVP…LGLA.

The protein belongs to the cation transport ATPase (P-type) (TC 3.A.3) family. Type IA subfamily. In terms of assembly, the system is composed of three essential subunits: KdpA, KdpB and KdpC.

The protein localises to the cell inner membrane. The enzyme catalyses K(+)(out) + ATP + H2O = K(+)(in) + ADP + phosphate + H(+). Functionally, part of the high-affinity ATP-driven potassium transport (or Kdp) system, which catalyzes the hydrolysis of ATP coupled with the electrogenic transport of potassium into the cytoplasm. This subunit is responsible for energy coupling to the transport system and for the release of the potassium ions to the cytoplasm. The chain is Potassium-transporting ATPase ATP-binding subunit from Salmonella agona (strain SL483).